We begin with the raw amino-acid sequence, 339 residues long: Dihydroorotate dehydrogenase (quinone) (339 aa).

FMN contacts are provided by residues 61-65 (AGLDK) and Thr85. Lys65 lines the substrate pocket. 110-114 (NRMGF) provides a ligand contact to substrate. Asn138 and Asn171 together coordinate FMN. Position 171 (Asn171) interacts with substrate. Ser174 functions as the Nucleophile in the catalytic mechanism. Asn176 contributes to the substrate binding site. The FMN site is built by Lys216 and Thr244. Position 245 to 246 (245 to 246 (NT)) interacts with substrate. FMN contacts are provided by residues Gly267, Gly296, and 317-318 (YS).

This sequence belongs to the dihydroorotate dehydrogenase family. Type 2 subfamily. As to quaternary structure, monomer. The cofactor is FMN.

The protein resides in the cell membrane. The catalysed reaction is (S)-dihydroorotate + a quinone = orotate + a quinol. The protein operates within pyrimidine metabolism; UMP biosynthesis via de novo pathway; orotate from (S)-dihydroorotate (quinone route): step 1/1. Functionally, catalyzes the conversion of dihydroorotate to orotate with quinone as electron acceptor. In Pseudomonas fluorescens (strain ATCC BAA-477 / NRRL B-23932 / Pf-5), this protein is Dihydroorotate dehydrogenase (quinone).